A 59-amino-acid chain; its full sequence is Large ribosomal subunit protein uL30 (59 aa).

Belongs to the universal ribosomal protein uL30 family. In terms of assembly, part of the 50S ribosomal subunit.

The sequence is that of Large ribosomal subunit protein uL30 from Bacillus subtilis (strain 168).